We begin with the raw amino-acid sequence, 283 residues long: Acetylglutamate kinase (283 aa).

Substrate is bound by residues Gly-63 to Gly-64, Arg-85, and Asn-178.

The protein belongs to the acetylglutamate kinase family. ArgB subfamily.

It is found in the cytoplasm. The catalysed reaction is N-acetyl-L-glutamate + ATP = N-acetyl-L-glutamyl 5-phosphate + ADP. It functions in the pathway amino-acid biosynthesis; L-arginine biosynthesis; N(2)-acetyl-L-ornithine from L-glutamate: step 2/4. Catalyzes the ATP-dependent phosphorylation of N-acetyl-L-glutamate. The polypeptide is Acetylglutamate kinase (Prochlorococcus marinus (strain MIT 9515)).